Here is a 197-residue protein sequence, read N- to C-terminus: UDP-N-acetylglucosamine transferase subunit ALG13 (197 aa).

It belongs to the glycosyltransferase 28 family. Heterodimer with ALG14 to form a functional enzyme.

It localises to the endoplasmic reticulum. The catalysed reaction is an N-acetyl-alpha-D-glucosaminyl-diphospho-di-trans,poly-cis-dolichol + UDP-N-acetyl-alpha-D-glucosamine = an N,N'-diacetylchitobiosyl-diphospho-di-trans,poly-cis-dolichol + UDP + H(+). Functionally, involved in protein N-glycosylation. Essential for the second step of the dolichol-linked oligosaccharide pathway. In Kluyveromyces lactis (strain ATCC 8585 / CBS 2359 / DSM 70799 / NBRC 1267 / NRRL Y-1140 / WM37) (Yeast), this protein is UDP-N-acetylglucosamine transferase subunit ALG13 (ALG13).